The sequence spans 300 residues: N-carbamoylputrescine amidase (300 aa).

The CN hydrolase domain maps to 8-266; the sequence is VTVAALQFAC…EAVLVAQFDL (259 aa). Catalysis depends on E47, which acts as the Proton acceptor. K120 serves as the catalytic Proton donor. C157 functions as the Nucleophile in the catalytic mechanism.

The protein belongs to the carbon-nitrogen hydrolase superfamily. As to quaternary structure, homooctamer.

It catalyses the reaction N-carbamoylputrescine + H2O + 2 H(+) = putrescine + NH4(+) + CO2. Its pathway is amine and polyamine biosynthesis; putrescine biosynthesis via agmatine pathway; putrescine from N-carbamoylputrescine (amidase route): step 1/1. Its function is as follows. Involved in polyamine biosynthesis. The polypeptide is N-carbamoylputrescine amidase (CPA) (Solanum lycopersicum (Tomato)).